A 132-amino-acid polypeptide reads, in one-letter code: Small ribosomal subunit protein uS8 (132 aa).

Belongs to the universal ribosomal protein uS8 family. As to quaternary structure, part of the 30S ribosomal subunit. Contacts proteins S5 and S12.

One of the primary rRNA binding proteins, it binds directly to 16S rRNA central domain where it helps coordinate assembly of the platform of the 30S subunit. The polypeptide is Small ribosomal subunit protein uS8 (Macrococcus caseolyticus (strain JCSC5402) (Macrococcoides caseolyticum)).